A 209-amino-acid polypeptide reads, in one-letter code: Protein TIC 20-v, chloroplastic (209 aa).

The transit peptide at 1–49 (MAIISQFFAPLPSLTGTLTLTGRSFLPLNLDTQFPKPRLSRDRAATLVL) directs the protein to the chloroplast. Transmembrane regions (helical) follow at residues 63 to 83 (IISA…GKFI), 103 to 123 (AFKS…FVVV), 132 to 152 (VRFN…PDLL), and 173 to 193 (TVFL…LFGL).

Belongs to the Tic20 family. In terms of assembly, part of the Tic complex. As to expression, expressed in leaves, siliques and roots.

The protein localises to the plastid. It is found in the chloroplast inner membrane. In terms of biological role, may be involved in protein precursor import into chloroplasts. Not redundant with TIC20-I, TIC20-II or TIC20-IV. The chain is Protein TIC 20-v, chloroplastic (TIC20-V) from Arabidopsis thaliana (Mouse-ear cress).